The primary structure comprises 198 residues: ATP-dependent Clp protease proteolytic subunit (198 aa).

Residue serine 102 is the Nucleophile of the active site. Histidine 127 is a catalytic residue.

Belongs to the peptidase S14 family. In terms of assembly, fourteen ClpP subunits assemble into 2 heptameric rings which stack back to back to give a disk-like structure with a central cavity, resembling the structure of eukaryotic proteasomes.

It is found in the cytoplasm. The catalysed reaction is Hydrolysis of proteins to small peptides in the presence of ATP and magnesium. alpha-casein is the usual test substrate. In the absence of ATP, only oligopeptides shorter than five residues are hydrolyzed (such as succinyl-Leu-Tyr-|-NHMec, and Leu-Tyr-Leu-|-Tyr-Trp, in which cleavage of the -Tyr-|-Leu- and -Tyr-|-Trp bonds also occurs).. Functionally, cleaves peptides in various proteins in a process that requires ATP hydrolysis. Has a chymotrypsin-like activity. Plays a major role in the degradation of misfolded proteins. The chain is ATP-dependent Clp protease proteolytic subunit from Brachyspira hyodysenteriae (strain ATCC 49526 / WA1).